The chain runs to 42 residues: Statherin (42 aa).

The interval 1-6 is hydroxyapatite-binding; inhibits crystal growth; sequence DSSEEK. 2 positions are modified to phosphoserine: Ser-2 and Ser-3. Positions 18 to 42 are disordered; sequence RYGPYQPFVPPPLYPQPYQPYQPQY. Residues 18–42 form a hydrophobic; inhibits precipitation of calcium phosphate salts region; that stretch reads RYGPYQPFVPPPLYPQPYQPYQPQY. The span at 24-42 shows a compositional bias: pro residues; sequence PFVPPPLYPQPYQPYQPQY.

The protein belongs to the histatin/statherin family. Secreted by parotid and submandibular glands.

The protein resides in the secreted. Its function is as follows. Salivary protein that stabilizes saliva supersaturated with calcium salts by inhibiting the precipitation of calcium phosphate salts. It also modulates hydroxyapatite crystal formation on the tooth surface. The protein is Statherin (STATH) of Macaca arctoides (Stump-tailed macaque).